The primary structure comprises 304 residues: Fructose permease IIC component (304 aa).

The region spanning 1–304 is the PTS EIIC type-2 domain; that stretch reads IHSADPKDPT…GIIKKPVEEK (304 aa). Transmembrane regions (helical) follow at residues 20–40, 62–82, 98–118, 140–160, 181–201, 214–234, 238–258, and 277–297; these read FIGS…FIAM, NAGF…VILL, PVLI…QFVI, NLVL…GGPL, AAIM…TTFF, ITCY…FAAA, VIPA…FFRV, and LLYL…LGII.

It is found in the cell membrane. Its function is as follows. The phosphoenolpyruvate-dependent sugar phosphotransferase system (PTS), a major carbohydrate active -transport system, catalyzes the phosphorylation of incoming sugar substrates concomitant with their translocation across the cell membrane. This system is involved in fructose transport. This chain is Fructose permease IIC component (fruA), found in Bacillus amyloliquefaciens (Bacillus velezensis).